A 313-amino-acid polypeptide reads, in one-letter code: Small ribosomal subunit protein uS2 (313 aa).

Residue S2 is modified to N-acetylserine. Laminin-binding stretches follow at residues 161–180 (IPCN…MLAR) and 205–229 (RDPE…EFQG). [DE]-W-[ST] repeat units follow at residues 230–232 (EWS) and 245–247 (DWS). Positions 242–313 (EVADWSEGVA…DWGGTTSDWS (72 aa)) are laminin-binding. Low complexity predominate over residues 262-274 (PATAAAAAAAAPP). The interval 262–313 (PATAAAAAAAAPPVKTGEVFSEDWSTQPATDDWSTAPTAQASDWGGTTSDWS) is disordered. [DE]-W-[ST] repeat units follow at residues 284–286 (DWS), 293–295 (DWS), and 311–313 (DWS). Polar residues predominate over residues 284 to 313 (DWSTQPATDDWSTAPTAQASDWGGTTSDWS).

The protein belongs to the universal ribosomal protein uS2 family. In terms of assembly, monomer (37LRP) and homodimer (67LR). Component of the small ribosomal subunit. Mature ribosomes consist of a small (40S) and a large (60S) subunit. The 40S subunit contains about 33 different proteins and 1 molecule of RNA (18S). The 60S subunit contains about 49 different proteins and 3 molecules of RNA (28S, 5.8S and 5S). Interacts with rps21. Interacts with several laminins including at least lamb1. Interacts with mdk. Acylated. Acylation may be a prerequisite for conversion of the monomeric 37 kDa laminin receptor precursor (37LRP) to the mature dimeric 67 kDa laminin receptor (67LR), and may provide a mechanism for membrane association. In terms of processing, cleaved by stromelysin-3 (ST3) at the cell surface. Cleavage by stromelysin-3 may be a mechanism to alter cell-extracellular matrix interactions.

Its subcellular location is the cell membrane. The protein localises to the cytoplasm. It is found in the nucleus. In terms of biological role, required for the assembly and/or stability of the 40S ribosomal subunit. Required for the processing of the 20S rRNA-precursor to mature 18S rRNA in a late step of the maturation of 40S ribosomal subunits. Also functions as a cell surface receptor for laminin. Plays a role in cell adhesion to the basement membrane and in the consequent activation of signaling transduction pathways. May play a role in cell fate determination and tissue morphogenesis. This Solea senegalensis (Senegalese sole) protein is Small ribosomal subunit protein uS2 (rpsa).